A 274-amino-acid polypeptide reads, in one-letter code: MQFSKMHGLGNDFVVVDGVTQNVFFTPETIRRLANRHCGIGFDQLLIVEAPYDPELDFHYRIFNADGSEVSQCGNGARCFARFVTLKGLTNKKDISVSTQKGNMVLTVKDDNQIRVNMGEPIWEPAKIPFTANKFEKNYILRTDIQTVLCGAVSMGNPHCVVQVDDIQTANVEQLGPLLESHERFPERVNAGFMQIINKEHIKLRVYERGAGETQACGSGACAAVAVGIMQGLLNNNVQVDLSGGSLMIEWNGVGHPLYMTGEATHIYDGFITL.

3 residues coordinate substrate: asparagine 11, glutamine 44, and asparagine 64. The Proton donor role is filled by cysteine 73. Substrate is bound by residues 74-75 (GN), asparagine 157, asparagine 190, and 208-209 (ER). Catalysis depends on cysteine 217, which acts as the Proton acceptor. 218-219 (GS) provides a ligand contact to substrate.

Belongs to the diaminopimelate epimerase family. As to quaternary structure, homodimer.

The protein localises to the cytoplasm. The enzyme catalyses (2S,6S)-2,6-diaminopimelate = meso-2,6-diaminopimelate. Its pathway is amino-acid biosynthesis; L-lysine biosynthesis via DAP pathway; DL-2,6-diaminopimelate from LL-2,6-diaminopimelate: step 1/1. Catalyzes the stereoinversion of LL-2,6-diaminopimelate (L,L-DAP) to meso-diaminopimelate (meso-DAP), a precursor of L-lysine and an essential component of the bacterial peptidoglycan. In Haemophilus influenzae (strain PittGG), this protein is Diaminopimelate epimerase.